Here is a 429-residue protein sequence, read N- to C-terminus: Histidine--tRNA ligase (429 aa).

It belongs to the class-II aminoacyl-tRNA synthetase family. As to quaternary structure, homodimer.

It localises to the cytoplasm. The catalysed reaction is tRNA(His) + L-histidine + ATP = L-histidyl-tRNA(His) + AMP + diphosphate + H(+). This Stutzerimonas stutzeri (strain A1501) (Pseudomonas stutzeri) protein is Histidine--tRNA ligase.